The following is a 392-amino-acid chain: Basic salivary proline-rich protein 1 (392 aa).

Positions 1–16 (MLLILLSVALLALSSA) are cleaved as a signal peptide. Gln17 bears the Pyrrolidone carboxylic acid mark. Over residues 19-28 (LNEDVSQEES) the composition is skewed to polar residues. Positions 19 to 392 (LNEDVSQEES…QGGRPSRPPQ (374 aa)) are disordered. Residues 34–47 (GNPQGPSPQGGNKP) show a composition bias toward low complexity. A Phosphoserine; alternate modification is found at Ser40. Ser40 is a glycosylation site (O-linked (Hex) serine; alternate). The span at 48–83 (QGPPPPPGKPQGPPPQGGNKPQGPPPPGKPQGPPPQ) shows a compositional bias: pro residues. 15 consecutive repeat copies span residues 53-72 (PPGK…QGPP), 73-92 (PPGK…SPRS), 93-112 (PPGK…QGPP), 114-133 (PPGK…QGPP), 134-153 (PPGK…SPRS), 154-173 (PPGK…QGPP), 175-194 (PPGK…QGPP), 195-214 (PPGK…SPRS), 215-234 (PPGK…QGPP), 236-255 (PPGK…QGPP), 256-275 (PPGK…SPQS), 276-295 (PPGK…QGPP), 297-316 (PPGK…QGPP), 317-336 (PPGK…QSAR), and 338-357 (PPGK…QGPP). Residues 53 to 357 (PPGKPQGPPP…QEGNNPQGPP (305 aa)) form a 15 X 20 AA approximate tandem repeats of P-P-G-K-P-Q-G-P-P-[PAQ]-Q-[GE]-[GD]-[NKS]-[KSQRN]-[PRQS]-[QS] [GPS]-[PQAR]-[PSR] region. An O-linked (HexNAc...) serine glycan is attached at Ser87. Pro residues predominate over residues 91–144 (RSPPGKPQGPPPQGGNQPQGPPPPPGKPQGPPPQGGNKPQGPPPPGKPQGPPPQ). Ser92 carries the post-translational modification Phosphoserine. Residue Ser150 is modified to Phosphoserine; alternate. Ser150 carries an O-linked (Hex) serine; alternate glycan. 4 stretches are compositionally biased toward pro residues: residues 152–205 (RSPP…PPPQ), 213–243 (RSPP…PQGP), 252–266 (QGPP…PPPQ), and 274–324 (QSPP…PQGP). The segment covering 325-334 (PAQGGSKSQS) has biased composition (low complexity). Ser330 carries O-linked (HexNAc...) serine glycosylation. Residues 354–392 (QGPPPPAGGNPQQPQAPPAGQPQGPPRPPQGGRPSRPPQ) are compositionally biased toward pro residues.

O-glycosylated. O-glycosylation on Ser-87 is prevalent in head and neck cancer patients. O-Glycosylation on Ser-330 has a 5 times prevalence in head and neck cancers. Post-translationally, proteolytically cleaved at the tripeptide Xaa-Pro-Gln, where Xaa in the P(3) position is mostly lysine. The endoprotease may be of microbial origin. In terms of processing, pyroglutamate formation occurs on terminal Gln residues of cleaved peptides. Besides on the N-terminal of mature PBR1, pyroglutamate formation found on at least Gln-58.

It is found in the secreted. This Homo sapiens (Human) protein is Basic salivary proline-rich protein 1 (PRB1).